The primary structure comprises 546 residues: Glucose-6-phosphate isomerase (546 aa).

The active-site Proton donor is Glu-357. Catalysis depends on residues His-389 and Lys-509.

This sequence belongs to the GPI family.

Its subcellular location is the cytoplasm. The catalysed reaction is alpha-D-glucose 6-phosphate = beta-D-fructose 6-phosphate. It participates in carbohydrate biosynthesis; gluconeogenesis. It functions in the pathway carbohydrate degradation; glycolysis; D-glyceraldehyde 3-phosphate and glycerone phosphate from D-glucose: step 2/4. Functionally, catalyzes the reversible isomerization of glucose-6-phosphate to fructose-6-phosphate. The polypeptide is Glucose-6-phosphate isomerase (Anaeromyxobacter sp. (strain K)).